Consider the following 307-residue polypeptide: MTTSEPYERAFDEDIQRGTTEPCPECGGPVRTNSAETVCADCGLIIDEQSIDRGPEWHRDDADTAKRTGAPLTPARHDRGLSTVIGSGQDARGTALSSEKRRRLARMRREQSRGRWRSTKERNLGHGLTEIRRIASALGLADSVRDQACQLFRTAQNERLLKGRSIEAMAAASVFGACRCNGESWLIDDVAPMAQVGQNRVENAYTVLNEELGLPTPPVSLDQFVPRLASDLGCTDVVRRRAEELVVQAVDAGITTGVHPSGFAAACLYMAACVHDAPLTQADAAAAAGVTVETIRSHRDRLLSIVE.

The TFIIB-type zinc-finger motif lies at 19–47 (TTEPCPECGGPVRTNSAETVCADCGLIID). Residues Cys23, Cys26, Cys39, and Cys42 each coordinate Zn(2+). Composition is skewed to basic and acidic residues over residues 54 to 66 (GPEWHRDDADTAK) and 107 to 121 (MRREQSRGRWRSTKE). The tract at residues 54–121 (GPEWHRDDAD…SRGRWRSTKE (68 aa)) is disordered. A run of 2 repeats spans residues 129–212 (TEIR…NEEL) and 223–304 (QFVP…RLLS).

Belongs to the TFIIB family.

Its function is as follows. Stabilizes TBP binding to an archaeal box-A promoter. Also responsible for recruiting RNA polymerase II to the pre-initiation complex (DNA-TBP-TFIIB). The polypeptide is Transcription initiation factor IIB 5 (Halobacterium salinarum (strain ATCC 700922 / JCM 11081 / NRC-1) (Halobacterium halobium)).